The chain runs to 137 residues: Large ribosomal subunit protein uL16 (137 aa).

It belongs to the universal ribosomal protein uL16 family. As to quaternary structure, part of the 50S ribosomal subunit.

Its function is as follows. Binds 23S rRNA and is also seen to make contacts with the A and possibly P site tRNAs. This chain is Large ribosomal subunit protein uL16, found in Bartonella tribocorum (strain CIP 105476 / IBS 506).